Reading from the N-terminus, the 142-residue chain is Glia maturation factor beta (142 aa).

Serine 2 is modified (N-acetylserine). Positions 4–139 (SLVVCDVAED…TEEWLREKLG (136 aa)) constitute an ADF-H domain.

The protein belongs to the actin-binding proteins ADF family. GMF subfamily. In terms of processing, phosphorylated; stimulated by phorbol ester.

In terms of biological role, this protein causes differentiation of brain cells, stimulation of neural regeneration, and inhibition of proliferation of tumor cells. This chain is Glia maturation factor beta (Gmfb), found in Rattus norvegicus (Rat).